The chain runs to 332 residues: Cytoskeleton protein RodZ (332 aa).

Over 1 to 111 (MNTETTQDTT…LKKSRKKRDG (111 aa)) the chain is Cytoplasmic. The HTH cro/C1-type domain occupies 19–71 (LREARERLGLTQQTIAERLCLKITTVRDIEDGTTPADLAPTFLRGYIRSYAKL). A DNA-binding region (H-T-H motif) is located at residues 30–49 (QQTIAERLCLKITTVRDIED). A helical; Signal-anchor for type II membrane protein membrane pass occupies residues 112-132 (WLMIITWLVVLVVLGLTGAWW). Residues 133 to 332 (WQNHQAQQAE…QVARLTLTAE (200 aa)) lie on the Periplasmic side of the membrane. The interval 149–225 (HASSMQSQTE…PSQANATQSQ (77 aa)) is disordered. Polar residues-rich tracts occupy residues 151–160 (SSMQSQTEGQ) and 168–182 (SAPQETSTAGSAATP). Over residues 190 to 225 (SATIAATPSTPPSSTTASSAAPSSQSPSQANATQSQ) the composition is skewed to low complexity.

This sequence belongs to the RodZ family.

It is found in the cell inner membrane. Functionally, cytoskeletal protein that is involved in cell-shape control through regulation of the length of the long axis. In Pectobacterium atrosepticum (strain SCRI 1043 / ATCC BAA-672) (Erwinia carotovora subsp. atroseptica), this protein is Cytoskeleton protein RodZ.